A 92-amino-acid polypeptide reads, in one-letter code: Bombyxin A-4 (92 aa).

The first 19 residues, 1 to 19, serve as a signal peptide directing secretion; it reads MKILLAIALMLSTVMWVST. Gln20 is modified (pyrrolidone carboxylic acid). Disulfide bonds link Cys29–Cys79, Cys41–Cys92, and Cys78–Cys83. Residues 50-70 constitute a propeptide, c peptide like; sequence SGAQFASYGSAWLMPYSEGRG.

This sequence belongs to the insulin family. As to quaternary structure, heterodimer of a B chain and an A chain linked by two disulfide bonds.

The protein resides in the secreted. Functionally, brain peptide responsible for activation of prothoracic glands to produce ecdysone in insects. This chain is Bombyxin A-4 (BBXA4), found in Bombyx mori (Silk moth).